We begin with the raw amino-acid sequence, 239 residues long: Probable replication-associated protein repA2 (239 aa).

The protein belongs to the IncFII RepA family.

Functionally, this protein is essential for plasmid replication; it is involved in copy control functions. The polypeptide is Probable replication-associated protein repA2 (repA2) (Buchnera aphidicola subsp. Baizongia pistaciae (strain Bp)).